The primary structure comprises 498 residues: Cytochrome P450 monooxygenase apdB (498 aa).

The chain crosses the membrane as a helical span at residues alanine 20–isoleucine 40. Cysteine 457 is a binding site for heme.

Belongs to the cytochrome P450 family. Heme serves as cofactor.

It is found in the membrane. The protein operates within secondary metabolite biosynthesis. Its function is as follows. Cytochrome P450 monooxygenase; part of the gene cluster that mediates the biosynthesis of aspyridones. The polyketide-amino acid backbone preaspyridone A is first assembled by the PKS-NRPS hybrid apdA. The assembly of preaspyridone A is initiated by loading of malonyl-CoA onto apdA, followed by decarboxylation to yield the acetyl starter unit. The growing polyketide chain then elongates into a tetraketide. The adpA PKS module catalyzes three Claisen condensations, as well as beta-keto processing and methylation. Alpha-methylation step during polyketide synthesis is a prerequisite and a key checkpoint for chain transfer between PKS and NRPS modules. The downstream NRPS module contains the condensation (C), adenylation (A), and thiolation (T) domains and catalyzes the incorporation of tyrosine via the formation of the L-tyrosinyl-thioester and the amide linkage between L-tyrosinyl-thioester and the tetraketide. The bimodular assembly line is terminated with a reductase (R) domain that facilitates formation and release of the tetramic acid product. Because apdA lacks a designated enoylreductase (ER) domain, the required activity is provided the enoyl reductase apdC. ApdC appears to operate with different stereoselectivity in different PKS cycle. Combined with apdC, apdA is proposed to synthesize preaspyridone A via about 20 enzymatic steps. A number of oxidative steps performed successively by the cytochrome P450 monooxygenases apdE and apdB are required for the conversion of preaspyridone A to aspyridone A. The cytochrome P450 monooxygenase apdE is responsible for the oxidative dephenylation of preaspyridone A. Finally, the predicted FAD-dependent monooxygenase apdD and the acyl-CoA dehydrogenase apdG may be involved in the transformation of aspyridone A into aspyridone B. The protein is Cytochrome P450 monooxygenase apdB of Emericella nidulans (strain FGSC A4 / ATCC 38163 / CBS 112.46 / NRRL 194 / M139) (Aspergillus nidulans).